The sequence spans 229 residues: Cytidylate kinase (229 aa).

12-20 (GPSGSGKGT) serves as a coordination point for ATP.

It belongs to the cytidylate kinase family. Type 1 subfamily.

The protein resides in the cytoplasm. The catalysed reaction is CMP + ATP = CDP + ADP. It carries out the reaction dCMP + ATP = dCDP + ADP. This chain is Cytidylate kinase, found in Pseudomonas fluorescens (strain Pf0-1).